The chain runs to 623 residues: Chaperone protein DnaK (623 aa).

Thr197 is subject to Phosphothreonine; by autocatalysis. The span at 595–615 (AENMYKKDEPNTANDKKKKDD) shows a compositional bias: basic and acidic residues. Positions 595–623 (AENMYKKDEPNTANDKKKKDDDVIDAEVE) are disordered.

This sequence belongs to the heat shock protein 70 family.

Functionally, acts as a chaperone. The polypeptide is Chaperone protein DnaK (Campylobacter jejuni subsp. jejuni serotype O:6 (strain 81116 / NCTC 11828)).